The primary structure comprises 618 residues: Glycine--tRNA ligase 2 (618 aa).

Position 187 (Glu187) interacts with glycine. ATP contacts are provided by residues 219-221 (RNE) and 230-231 (RV). Glu238 serves as a coordination point for glycine. Position 347–348 (347–348 (EC)) interacts with ATP. 466–468 (EPS) contributes to the glycine binding site. Arg473 serves as a coordination point for ATP.

This sequence belongs to the class-II aminoacyl-tRNA synthetase family. Homodimer.

It is found in the cytoplasm. The catalysed reaction is tRNA(Gly) + glycine + ATP = glycyl-tRNA(Gly) + AMP + diphosphate. The enzyme catalyses 2 ATP + H(+) = P(1),P(4)-bis(5'-adenosyl) tetraphosphate + diphosphate. Catalyzes the ATP-dependent ligation of glycine to the 3'-end of its cognate tRNA, via the formation of an aminoacyl-adenylate intermediate (Gly-AMP). Also produces diadenosine tetraphosphate (Ap4A), a universal pleiotropic signaling molecule needed for cell regulation pathways, by direct condensation of 2 ATPs. Thereby, may play a special role in Ap4A homeostasis. The protein is Glycine--tRNA ligase 2 (GRS2) of Saccharomyces cerevisiae (strain ATCC 204508 / S288c) (Baker's yeast).